A 227-amino-acid chain; its full sequence is Ribosomal RNA small subunit methyltransferase G (227 aa).

Residues G81, L86, 131–132 (AE), and R149 contribute to the S-adenosyl-L-methionine site.

This sequence belongs to the methyltransferase superfamily. RNA methyltransferase RsmG family.

The protein localises to the cytoplasm. In terms of biological role, specifically methylates the N7 position of guanine in position 518 of 16S rRNA. In Rhodococcus jostii (strain RHA1), this protein is Ribosomal RNA small subunit methyltransferase G.